The sequence spans 304 residues: UDP-3-O-acyl-N-acetylglucosamine deacetylase (304 aa).

Residues histidine 78, histidine 237, and aspartate 241 each contribute to the Zn(2+) site. Histidine 264 serves as the catalytic Proton donor.

The protein belongs to the LpxC family. Zn(2+) is required as a cofactor.

The enzyme catalyses a UDP-3-O-[(3R)-3-hydroxyacyl]-N-acetyl-alpha-D-glucosamine + H2O = a UDP-3-O-[(3R)-3-hydroxyacyl]-alpha-D-glucosamine + acetate. It participates in glycolipid biosynthesis; lipid IV(A) biosynthesis; lipid IV(A) from (3R)-3-hydroxytetradecanoyl-[acyl-carrier-protein] and UDP-N-acetyl-alpha-D-glucosamine: step 2/6. Functionally, catalyzes the hydrolysis of UDP-3-O-myristoyl-N-acetylglucosamine to form UDP-3-O-myristoylglucosamine and acetate, the committed step in lipid A biosynthesis. This is UDP-3-O-acyl-N-acetylglucosamine deacetylase from Nitrosococcus oceani (strain ATCC 19707 / BCRC 17464 / JCM 30415 / NCIMB 11848 / C-107).